We begin with the raw amino-acid sequence, 184 residues long: Large ribosomal subunit protein uL5 (184 aa).

The protein belongs to the universal ribosomal protein uL5 family. Part of the 50S ribosomal subunit; part of the 5S rRNA/L5/L18/L25 subcomplex. Contacts the 5S rRNA and the P site tRNA. Forms a bridge to the 30S subunit in the 70S ribosome.

Its function is as follows. This is one of the proteins that bind and probably mediate the attachment of the 5S RNA into the large ribosomal subunit, where it forms part of the central protuberance. In the 70S ribosome it contacts protein S13 of the 30S subunit (bridge B1b), connecting the 2 subunits; this bridge is implicated in subunit movement. Contacts the P site tRNA; the 5S rRNA and some of its associated proteins might help stabilize positioning of ribosome-bound tRNAs. The chain is Large ribosomal subunit protein uL5 from Agrobacterium fabrum (strain C58 / ATCC 33970) (Agrobacterium tumefaciens (strain C58)).